Here is a 907-residue protein sequence, read N- to C-terminus: Aldehyde oxidoreductase (907 aa).

The 78-residue stretch at isoleucine 2 to valine 79 folds into the 2Fe-2S ferredoxin-type domain. Residues cysteine 40, cysteine 45, cysteine 48, cysteine 60, cysteine 100, cysteine 103, cysteine 137, and cysteine 139 each coordinate [2Fe-2S] cluster. Mo-molybdopterin cytosine dinucleotide is bound by residues histidine 653 and glutamate 869.

Belongs to the xanthine dehydrogenase family. As to quaternary structure, homodimer. The cofactor is Mo-molybdopterin cytosine dinucleotide. It depends on [2Fe-2S] cluster as a cofactor.

The catalysed reaction is an aldehyde + A + H2O = a carboxylate + AH2 + H(+). The protein is Aldehyde oxidoreductase (mop) of Megalodesulfovibrio gigas (Desulfovibrio gigas).